The following is a 425-amino-acid chain: Serine--tRNA ligase (425 aa).

230–232 (TAE) is an L-serine binding site. An ATP-binding site is contributed by 261 to 263 (RSE). Glu284 lines the L-serine pocket. 348-351 (EISS) contributes to the ATP binding site. Residue Ser384 coordinates L-serine.

The protein belongs to the class-II aminoacyl-tRNA synthetase family. Type-1 seryl-tRNA synthetase subfamily. Homodimer. The tRNA molecule binds across the dimer.

It localises to the cytoplasm. The enzyme catalyses tRNA(Ser) + L-serine + ATP = L-seryl-tRNA(Ser) + AMP + diphosphate + H(+). It carries out the reaction tRNA(Sec) + L-serine + ATP = L-seryl-tRNA(Sec) + AMP + diphosphate + H(+). The protein operates within aminoacyl-tRNA biosynthesis; selenocysteinyl-tRNA(Sec) biosynthesis; L-seryl-tRNA(Sec) from L-serine and tRNA(Sec): step 1/1. Its function is as follows. Catalyzes the attachment of serine to tRNA(Ser). Is also able to aminoacylate tRNA(Sec) with serine, to form the misacylated tRNA L-seryl-tRNA(Sec), which will be further converted into selenocysteinyl-tRNA(Sec). In Streptococcus gordonii (strain Challis / ATCC 35105 / BCRC 15272 / CH1 / DL1 / V288), this protein is Serine--tRNA ligase.